The following is an 877-amino-acid chain: Leucine--tRNA ligase (877 aa).

The short motif at 50–60 is the 'HIGH' region element; sequence PYPSGKLHMGH. The 'KMSKS' region signature appears at 634 to 638; the sequence is KMSKS. Lys637 contributes to the ATP binding site.

This sequence belongs to the class-I aminoacyl-tRNA synthetase family.

It localises to the cytoplasm. The enzyme catalyses tRNA(Leu) + L-leucine + ATP = L-leucyl-tRNA(Leu) + AMP + diphosphate. The chain is Leucine--tRNA ligase from Hydrogenovibrio crunogenus (strain DSM 25203 / XCL-2) (Thiomicrospira crunogena).